The sequence spans 930 residues: G patch domain-containing protein TGH (930 aa).

Lysine 25 is covalently cross-linked (Glycyl lysine isopeptide (Lys-Gly) (interchain with G-Cter in ubiquitin)). The tract at residues 76-152 is disordered; sequence GWAPQSFTSS…PSAIPGPVPD (77 aa). In terms of domain architecture, G-patch spans 159–199; sequence SESIGVKLLLKMGWRRGHSIKEVRASSDARREARKAFLAFY. Residues 405–447 form an SURP motif repeat; that stretch reads LIEGFATFVSRCGKLYEDLSREKNQSNQLFDFLREGNGHDYYA. Disordered stretches follow at residues 478 to 508, 687 to 751, and 773 to 930; these read AETR…GSFQ, RQVS…NEAA, and FEVP…RRRD. A compositionally biased stretch (basic and acidic residues) spans 489 to 498; it reads PLQRSLKETD. Over residues 499–508 the composition is skewed to polar residues; that stretch reads TSASSGGSFQ. Positions 701-711 are enriched in acidic residues; it reads IEEPEVEVEVE. Basic and acidic residues predominate over residues 779 to 808; the sequence is EEIKSRSKPEDSSDKRLDRPGLKEKVEEKT. Over residues 848 to 857 the composition is skewed to basic residues; that stretch reads RRKRYNKKDR. The segment covering 858–877 has biased composition (basic and acidic residues); the sequence is HRNDSESDSSSDYHSRDKQG. Over residues 892 to 908 the composition is skewed to basic residues; it reads RSSHKKHSKHRRTKKSS. Positions 913–923 are enriched in basic and acidic residues; the sequence is SSDEEQKESRR.

Expressed in vasculature of cotyledons and leaves, young meristematic tissues, trichomes and pistils.

It localises to the nucleus speckle. Its subcellular location is the nucleus. It is found in the nucleoplasm. Functions as a component of microRNA (miRNA) and small interfering RNA (siRNA) biogenesis. May assist DCL1 and DCL4 to efficiently process and/or recruit the precursors of miRNAs and siRNAs. In the miRNA biogenesis pathway, associates with the DCL1 complex that processes primary miRNAs (pri-miRNAs) into miRNAs. Binds pri-miRNAs and precursor miRNAs (pre-miRNAs). Is required for the interaction between pri-miRNAs and DRB1. Required for general proper plant growth and, in particular, initiation of vascular development. Interacts genetically with AMP1, a glutamate carboxypeptidase involved in the regulation of meristem function. In Arabidopsis thaliana (Mouse-ear cress), this protein is G patch domain-containing protein TGH.